A 220-amino-acid chain; its full sequence is Phosphoribosylformylglycinamidine synthase subunit PurQ (220 aa).

The Glutamine amidotransferase type-1 domain occupies 2–220 (RVGVVVFPGS…LRSVLAGAKV (219 aa)). The active-site Nucleophile is cysteine 85. Catalysis depends on residues histidine 193 and glutamate 195.

Part of the FGAM synthase complex composed of 1 PurL, 1 PurQ and 2 PurS subunits.

Its subcellular location is the cytoplasm. It catalyses the reaction N(2)-formyl-N(1)-(5-phospho-beta-D-ribosyl)glycinamide + L-glutamine + ATP + H2O = 2-formamido-N(1)-(5-O-phospho-beta-D-ribosyl)acetamidine + L-glutamate + ADP + phosphate + H(+). The catalysed reaction is L-glutamine + H2O = L-glutamate + NH4(+). It participates in purine metabolism; IMP biosynthesis via de novo pathway; 5-amino-1-(5-phospho-D-ribosyl)imidazole from N(2)-formyl-N(1)-(5-phospho-D-ribosyl)glycinamide: step 1/2. Its function is as follows. Part of the phosphoribosylformylglycinamidine synthase complex involved in the purines biosynthetic pathway. Catalyzes the ATP-dependent conversion of formylglycinamide ribonucleotide (FGAR) and glutamine to yield formylglycinamidine ribonucleotide (FGAM) and glutamate. The FGAM synthase complex is composed of three subunits. PurQ produces an ammonia molecule by converting glutamine to glutamate. PurL transfers the ammonia molecule to FGAR to form FGAM in an ATP-dependent manner. PurS interacts with PurQ and PurL and is thought to assist in the transfer of the ammonia molecule from PurQ to PurL. This Rubrobacter xylanophilus (strain DSM 9941 / JCM 11954 / NBRC 16129 / PRD-1) protein is Phosphoribosylformylglycinamidine synthase subunit PurQ.